We begin with the raw amino-acid sequence, 697 residues long: PHD finger protein At1g33420 (697 aa).

The PHD-type zinc-finger motif lies at 603–653 (KVDCKCGTKDDDGERMLACDGCGVWHHTRCIGINNADALPSKFLCFRCIEL).

It is found in the nucleus. The sequence is that of PHD finger protein At1g33420 from Arabidopsis thaliana (Mouse-ear cress).